Reading from the N-terminus, the 347-residue chain is MSDQRDLSWKPPDAPSRIGITLETYILEGMLGFPAATGAFTSLLNQLGLVAKLVTSKVRRAGLANVLGYTGQTNVQGEVVQKLDEVANETLLSVLGRRGHCAAVVSEELGEMRLLSTDPRAKYIVVVDPLDGSSNIDVNISIGTIFGVLRKSDAKMGADPSDFLRPGRDLVAAGYVLYGSSTLLVITTGLGGVHGFTYDPTVGEFFLSHENIRIPERGSTYSINEGHSARWPEDVRRWNAWIKEDSKPEGRPYGARYVGSLVADAHRTLLKGGIFAYPADRSGQGKLRLLYEASPFAFIFEAAGGKASTGAERILDRVPRSLHERVPLVLGSPRDVEDFEQFVRGER.

Glutamate 107, aspartate 128, leucine 130, and aspartate 131 together coordinate Mg(2+). Residues 131-134 (DGSS), asparagine 224, tyrosine 257, and lysine 286 each bind substrate. Glutamate 292 serves as a coordination point for Mg(2+).

It belongs to the FBPase class 1 family. As to quaternary structure, homotetramer. Mg(2+) serves as cofactor.

Its subcellular location is the cytoplasm. It carries out the reaction beta-D-fructose 1,6-bisphosphate + H2O = beta-D-fructose 6-phosphate + phosphate. It participates in carbohydrate biosynthesis; gluconeogenesis. The sequence is that of Fructose-1,6-bisphosphatase class 1 from Sorangium cellulosum (strain So ce56) (Polyangium cellulosum (strain So ce56)).